The following is a 126-amino-acid chain: Fluoride-specific ion channel FluC 2 (126 aa).

4 helical membrane-spanning segments follow: residues Thr-5 to Leu-25, Gly-44 to Leu-64, Ala-68 to Leu-88, and Met-99 to Leu-119. 2 residues coordinate Na(+): Gly-78 and Thr-81.

The protein belongs to the fluoride channel Fluc/FEX (TC 1.A.43) family.

The protein localises to the cell membrane. It catalyses the reaction fluoride(in) = fluoride(out). Its activity is regulated as follows. Na(+) is not transported, but it plays an essential structural role and its presence is essential for fluoride channel function. Fluoride-specific ion channel. Important for reducing fluoride concentration in the cell, thus reducing its toxicity. This is Fluoride-specific ion channel FluC 2 from Mycobacterium bovis (strain ATCC BAA-935 / AF2122/97).